A 546-amino-acid polypeptide reads, in one-letter code: Sterol O-acyltransferase 1 (546 aa).

M1 is modified (N-acetylmethionine). A disordered region spans residues 1–37; the sequence is MVGEEKMSLRNRLSKSGENPEQDEAQRSVSDTQSNGR. At 1-134 the chain is on the cytoplasmic side; that stretch reads MVGEEKMSLR…LDELFEVDHI (134 aa). S8 carries the phosphoserine modification. Residues 27–37 show a composition bias toward polar residues; that stretch reads RSVSDTQSNGR. H133 contacts cholesterol. Residues 135-156 form a helical membrane-spanning segment; the sequence is RTIYHMFIGLLILFILSTLVVD. Residues 157-176 are Lumenal-facing; sequence YIDEGRLVLEFNLLGYAFGK. The chain crosses the membrane as a helical span at residues 177–202; sequence LPTVIWTWWAMFLSTLSIPYFLFQRW. Topologically, residues 203 to 214 are cytoplasmic; sequence AHGYSKTSHPLI. A helical transmembrane segment spans residues 215 to 240; that stretch reads YSLSHGFFFLVFQLGILGFVPTYVVL. Topologically, residues 241 to 248 are lumenal; it reads AYTLPPAS. Residues 249-272 form a helical membrane-spanning segment; sequence RFIVILEQIRMVMKAHSFVRENVP. The Cytoplasmic portion of the chain corresponds to 273–315; that stretch reads RVLNAAKEKSSTVPVPTVNQYLYFLFAPTLIYRDSYPRTPTVR. Residues 316-348 form a helical membrane-spanning segment; it reads WGYVAVQFLQVFGCLFYVYYIFERLCAPLFRNI. At 349 to 365 the chain is on the lumenal side; sequence KQEPFSARVLVLCVFNS. A helical transmembrane segment spans residues 366-391; sequence ILPGVLMLFLTFFAFLHCWLNAFAEM. At 392-439 the chain is on the cytoplasmic side; it reads LRFGDRMFYKDWWNSTSYSNYYRTWNVVVHDWLYYYAYKDLLWFFSKR. The FYXDWWN motif signature appears at 399–405; that stretch reads FYKDWWN. An acyl-CoA contacts are provided by N411, R414, N417, H421, Y429, K441, and S452. The helical transmembrane segment at 440 to 464 threads the bilayer; that stretch reads FKSAAMLAVFALSAVVHEYALAVCL. The active site involves H456. The Lumenal segment spans residues 465-470; sequence SYFYPV. A helical transmembrane segment spans residues 471–486; sequence LFVLFMFFGMAFNFIV. At 487 to 492 the chain is on the cytoplasmic side; that stretch reads NDSRKR. A helical membrane pass occupies residues 493 to 524; the sequence is PIWNIMVWASLFLGHGVILCFYSQEWYARQHC. C524 and C542 form a disulfide bridge. At 525–546 the chain is on the lumenal side; sequence PLKNPTFLDYVRPRSWTCQYVF.

Belongs to the membrane-bound acyltransferase family. Sterol o-acyltransferase subfamily. In terms of assembly, may form homo- or heterodimers. Interacts with UBIAD1.

The protein localises to the endoplasmic reticulum membrane. It carries out the reaction a sterol + a long-chain fatty acyl-CoA = a long-chain 3-hydroxysterol ester + CoA. The enzyme catalyses cholesterol + an acyl-CoA = a cholesterol ester + CoA. The catalysed reaction is cholesterol + (9Z)-octadecenoyl-CoA = cholesteryl (9Z-octadecenoate) + CoA. It catalyses the reaction cholesterol + hexadecanoyl-CoA = cholesteryl hexadecanoate + CoA. It carries out the reaction octadecanoyl-CoA + cholesterol = cholesteryl octadecanoate + CoA. The enzyme catalyses (9Z,12Z)-octadecadienoyl-CoA + cholesterol = cholesteryl (9Z,12Z)-octadecadienoate + CoA. The catalysed reaction is (5Z,8Z,11Z,14Z)-eicosatetraenoyl-CoA + cholesterol = cholesteryl (5Z,8Z,11Z,14Z)-eicosatetraenoate + CoA. It catalyses the reaction (9Z)-hexadecenoyl-CoA + cholesterol = cholesteryl (9Z)-hexadecenoate + CoA. It carries out the reaction (11Z)-octadecenoyl-CoA + cholesterol = cholesteryl (11Z)-octadecenoate + CoA. The enzyme catalyses (7Z)-octadecenoyl-CoA + cholesterol = cholesteryl (7Z)-octadecenoate + CoA. Functionally, catalyzes the formation of fatty acid-cholesterol esters, which are less soluble in membranes than cholesterol. Plays a role in lipoprotein assembly and dietary cholesterol absorption. Preferentially utilizes oleoyl-CoA ((9Z)-octadecenoyl-CoA) as a substrate: shows a higher activity towards an acyl-CoA substrate with a double bond at the delta-9 position (9Z) than towards saturated acyl-CoA or an unsaturated acyl-CoA with a double bond at the delta-7 (7Z) or delta-11 (11Z) positions. The sequence is that of Sterol O-acyltransferase 1 (SOAT1) from Cricetulus griseus (Chinese hamster).